The primary structure comprises 290 residues: Enoyl-CoA hydratase, mitochondrial (290 aa).

A mitochondrion-targeting transit peptide spans 1 to 29 (MAALRALLPRACNSLLSPVRCPEFRRFAS). 98–101 (ADIK) serves as a coordination point for substrate. Lys101 and Lys115 each carry N6-acetyllysine; alternate. 2 positions are modified to N6-succinyllysine; alternate: Lys101 and Lys115. Gly141 lines the substrate pocket. Lys204 carries the post-translational modification N6-succinyllysine. The residue at position 211 (Lys211) is an N6-acetyllysine.

Belongs to the enoyl-CoA hydratase/isomerase family. Homohexamer; dimer of trimers. Detected in liver (at protein level).

It is found in the mitochondrion matrix. The catalysed reaction is a (3S)-3-hydroxyacyl-CoA = a (2E)-enoyl-CoA + H2O. The enzyme catalyses a (3E)-enoyl-CoA = a 4-saturated (2E)-enoyl-CoA. It carries out the reaction (3E)-hexenoyl-CoA = (2E)-hexenoyl-CoA. It catalyses the reaction (3S)-3-hydroxybutanoyl-CoA = (2E)-butenoyl-CoA + H2O. The catalysed reaction is 3-hydroxyisovaleryl-CoA = 3-methylbut-2-enoyl-CoA + H2O. The enzyme catalyses 3-hydroxypropanoyl-CoA = acryloyl-CoA + H2O. It carries out the reaction 3-hydroxybutanoyl-CoA = (2E)-butenoyl-CoA + H2O. It catalyses the reaction 2-methylpropenoyl-CoA + H2O = (S)-3-hydroxyisobutanoyl-CoA. The catalysed reaction is (3S)-hydroxyhexanoyl-CoA = (2E)-hexenoyl-CoA + H2O. The enzyme catalyses (3S)-hydroxydecanoyl-CoA = (2E)-decenoyl-CoA + H2O. Its pathway is lipid metabolism; fatty acid beta-oxidation. Functionally, converts unsaturated trans-2-enoyl-CoA species ((2E)-enoyl-CoA) to the corresponding 3(S)-3-hydroxyacyl-CoA species through addition of a water molecule to the double bond. Catalyzes the hydration of medium- and short-chained fatty enoyl-CoA thioesters from 4 carbons long (C4) up to C16. Has high substrate specificity for crotonyl-CoA ((2E)-butenoyl-CoA) and moderate specificity for acryloyl-CoA, 3-methylcrotonyl-CoA (3-methyl-(2E)-butenoyl-CoA) and methacrylyl-CoA ((2E)-2-methylpropenoyl-CoA). Can bind tiglyl-CoA (2-methylcrotonoyl-CoA), but hydrates only a small amount of this substrate. Plays a key role in the beta-oxidation spiral of short- and medium-chain fatty acid oxidation. At a lower rate than the hydratase reaction, catalyzes the isomerase reaction of trans-3-enoyl-CoA species (such as (3E)-hexenoyl-CoA) to trans-2-enoyl-CoA species (such as (2E)-hexenoyl-CoA), which are subsequently hydrated to 3(S)-3-hydroxyacyl-CoA species (such as (3S)-hydroxyhexanoyl-CoA). This Rattus norvegicus (Rat) protein is Enoyl-CoA hydratase, mitochondrial.